A 585-amino-acid chain; its full sequence is uncharacterized protein (585 aa).

This is an uncharacterized protein from Escherichia coli (strain K12).